The following is a 117-amino-acid chain: LYR motif-containing protein 1 (117 aa).

The protein belongs to the complex I LYR family.

The polypeptide is LYR motif-containing protein 1 (lyrm1) (Dictyostelium discoideum (Social amoeba)).